A 137-amino-acid polypeptide reads, in one-letter code: Insulin-like peptide 2 (137 aa).

Residues 1-26 (MSKPLSFISMVAVILLASSTVKLAQG) form the signal peptide. 3 cysteine pairs are disulfide-bonded: cysteine 29-cysteine 119, cysteine 41-cysteine 132, and cysteine 118-cysteine 123. Positions 53–104 (AMPGADSDLDALNPLQFVQEFEEEDNSISEPLRSALFPGSYLGGVLNSLAEV) are cleaved as a propeptide — connecting peptide.

The protein belongs to the insulin family. As to quaternary structure, heterodimer of a B chain and an A chain linked by two disulfide bonds. As to expression, broadly expressed at a low level in the embryonic mesoderm, beginning at stage 12. Expressed at a high level in the embryonic anterior midgut, with expression diminishing at late stage 16. Expressed at a low level in larval imaginal disks. Expressed at a high level in larval salivary glands and in seven cells of each larval brain hemisphere that may correspond to neurosecretory cells.

Its subcellular location is the secreted. Its function is as follows. Possible ligand of InR/insulin-like receptor. Plays a role in regulating body size by increasing cell size and cell number of individual organs. Probably mediates its growth effects by acting as a ligand for the insulin receptor and transducing a signal via the Chico/PI3K/Akt(PKB) pathway. The protein is Insulin-like peptide 2 of Drosophila melanogaster (Fruit fly).